Reading from the N-terminus, the 322-residue chain is tRNA uridine(34) hydroxylase (322 aa).

In terms of domain architecture, Rhodanese spans Gln-125–Glu-219. Cys-179 serves as the catalytic Cysteine persulfide intermediate.

Belongs to the TrhO family.

It carries out the reaction uridine(34) in tRNA + AH2 + O2 = 5-hydroxyuridine(34) in tRNA + A + H2O. In terms of biological role, catalyzes oxygen-dependent 5-hydroxyuridine (ho5U) modification at position 34 in tRNAs. In Bacillus licheniformis (strain ATCC 14580 / DSM 13 / JCM 2505 / CCUG 7422 / NBRC 12200 / NCIMB 9375 / NCTC 10341 / NRRL NRS-1264 / Gibson 46), this protein is tRNA uridine(34) hydroxylase.